We begin with the raw amino-acid sequence, 195 residues long: Dephospho-CoA kinase (195 aa).

The region spanning 2-195 (IIGLTGGIGV…DIVDSLSLSS (194 aa)) is the DPCK domain. 10-15 (GVGKSF) is a binding site for ATP.

Belongs to the CoaE family.

It localises to the cytoplasm. It catalyses the reaction 3'-dephospho-CoA + ATP = ADP + CoA + H(+). Its pathway is cofactor biosynthesis; coenzyme A biosynthesis; CoA from (R)-pantothenate: step 5/5. Catalyzes the phosphorylation of the 3'-hydroxyl group of dephosphocoenzyme A to form coenzyme A. In Wolbachia sp. subsp. Brugia malayi (strain TRS), this protein is Dephospho-CoA kinase.